The chain runs to 211 residues: Thymidylate kinase (211 aa).

11–18 (GPDGAGKT) serves as a coordination point for ATP.

This sequence belongs to the thymidylate kinase family.

It carries out the reaction dTMP + ATP = dTDP + ADP. Functionally, phosphorylation of dTMP to form dTDP in both de novo and salvage pathways of dTTP synthesis. The protein is Thymidylate kinase of Streptococcus pyogenes serotype M18 (strain MGAS8232).